We begin with the raw amino-acid sequence, 171 residues long: Crossover junction endodeoxyribonuclease RuvC (171 aa).

Active-site residues include Asp-11, Glu-71, and Asp-143. Residues Asp-11, Glu-71, and Asp-143 each coordinate Mg(2+).

It belongs to the RuvC family. As to quaternary structure, homodimer which binds Holliday junction (HJ) DNA. The HJ becomes 2-fold symmetrical on binding to RuvC with unstacked arms; it has a different conformation from HJ DNA in complex with RuvA. In the full resolvosome a probable DNA-RuvA(4)-RuvB(12)-RuvC(2) complex forms which resolves the HJ. The cofactor is Mg(2+).

The protein localises to the cytoplasm. It carries out the reaction Endonucleolytic cleavage at a junction such as a reciprocal single-stranded crossover between two homologous DNA duplexes (Holliday junction).. Functionally, the RuvA-RuvB-RuvC complex processes Holliday junction (HJ) DNA during genetic recombination and DNA repair. Endonuclease that resolves HJ intermediates. Cleaves cruciform DNA by making single-stranded nicks across the HJ at symmetrical positions within the homologous arms, yielding a 5'-phosphate and a 3'-hydroxyl group; requires a central core of homology in the junction. The consensus cleavage sequence is 5'-(A/T)TT(C/G)-3'. Cleavage occurs on the 3'-side of the TT dinucleotide at the point of strand exchange. HJ branch migration catalyzed by RuvA-RuvB allows RuvC to scan DNA until it finds its consensus sequence, where it cleaves and resolves the cruciform DNA. This is Crossover junction endodeoxyribonuclease RuvC from Chelativorans sp. (strain BNC1).